Reading from the N-terminus, the 863-residue chain is Eukaryotic translation initiation factor 3 subunit C (863 aa).

The interval 1-92 (MSRFFRGGDD…VKSAKDKRFD (92 aa)) is disordered. A compositionally biased stretch (acidic residues) spans 16 to 53 (SSDEEELYSTSEEEEEEDQDQEESSEEEDEEESSDEDE). Basic and acidic residues predominate over residues 79–92 (GATKVKSAKDKRFD). The region spanning 604–778 (FHMHINLELL…KTVIFRKGVE (175 aa)) is the PCI domain. A disordered region spans residues 808–863 (TQGSANAFSRKDGRQGGQRGGGQRSGRGGARAGGNAQRQAGGTQFTGGALGAAVRG). Positions 822-839 (QGGQRGGGQRSGRGGARA) are enriched in gly residues. The segment covering 840–850 (GGNAQRQAGGT) has biased composition (low complexity).

It belongs to the eIF-3 subunit C family. Component of the eukaryotic translation initiation factor 3 (eIF-3) complex.

The protein localises to the cytoplasm. In terms of biological role, component of the eukaryotic translation initiation factor 3 (eIF-3) complex, which is involved in protein synthesis of a specialized repertoire of mRNAs and, together with other initiation factors, stimulates binding of mRNA and methionyl-tRNAi to the 40S ribosome. The eIF-3 complex specifically targets and initiates translation of a subset of mRNAs involved in cell proliferation. In Chaetomium globosum (strain ATCC 6205 / CBS 148.51 / DSM 1962 / NBRC 6347 / NRRL 1970) (Soil fungus), this protein is Eukaryotic translation initiation factor 3 subunit C.